The following is a 428-amino-acid chain: Putative G-protein coupled receptor F59B2.13 (428 aa).

Residues 1–30 (MSNNTTIPSKTATDICLTDRQMSLSVSSTE) are Extracellular-facing. 2 N-linked (GlcNAc...) asparagine glycosylation sites follow: asparagine 3 and asparagine 4. The chain crosses the membrane as a helical span at residues 31–51 (GVLIGTIIPILVLFGISGNIL). The Cytoplasmic segment spans residues 52 to 67 (NLTVLLAPNLRTRSNQ). Residues 68–88 (LLACLAVADIVSLVVILPHSM) traverse the membrane as a helical segment. The Extracellular segment spans residues 89–110 (AHYETFETALWFRKFYGKYKFQ). A helical membrane pass occupies residues 111 to 131 (IIAMTNWSIATATWLVFVICL). Residues 132–154 (ERLIIIKYPLSVRKQAKFFTPRN) lie on the Cytoplasmic side of the membrane. Residues 155–175 (VVTIIVVTTFILTSYNHVSHA) form a helical membrane-spanning segment. Residues 176–222 (CAEKLFCNGTQYHVACLGIDSERWFRNEPNPNSEFMKSVVRVAPQVN) are Extracellular-facing. The N-linked (GlcNAc...) asparagine glycan is linked to asparagine 183. Residues 223–243 (AIFVVLIPVVLVIIFNVMLIL) form a helical membrane-spanning segment. The Cytoplasmic portion of the chain corresponds to 244–278 (TLRQRTKLFEPSKTIRGDSQFTQLQSKTEHKVTIT). Residues 279 to 299 (VTAIVTCFTITQSPSAFVTFL) form a helical membrane-spanning segment. At 300-309 (SSYVHRDWVT) the chain is on the extracellular side. Residues 310-330 (LSAICTILVVLGKALNFVLFC) form a helical membrane-spanning segment. Topologically, residues 331–428 (LSSASFRQRL…KEFRRGTSFV (98 aa)) are cytoplasmic.

The protein belongs to the G-protein coupled receptor 1 family.

Its subcellular location is the cell membrane. The polypeptide is Putative G-protein coupled receptor F59B2.13 (Caenorhabditis elegans).